We begin with the raw amino-acid sequence, 265 residues long: Sulfur carrier protein FdhD (265 aa).

Residue Cys-107 is the Cysteine persulfide intermediate of the active site.

Belongs to the FdhD family.

It is found in the cytoplasm. In terms of biological role, required for formate dehydrogenase (FDH) activity. Acts as a sulfur carrier protein that transfers sulfur from IscS to the molybdenum cofactor prior to its insertion into FDH. In Staphylococcus aureus (strain MRSA252), this protein is Sulfur carrier protein FdhD.